Reading from the N-terminus, the 225-residue chain is PKHD-type hydroxylase YbiX (225 aa).

One can recognise a Fe2OG dioxygenase domain in the interval 78–177; it reads TLSTPLFNRY…RVASFMWIQS (100 aa). 3 residues coordinate Fe cation: H96, D98, and H158. A 2-oxoglutarate-binding site is contributed by R168.

Fe(2+) is required as a cofactor. It depends on L-ascorbate as a cofactor.

The chain is PKHD-type hydroxylase YbiX from Escherichia coli O6:H1 (strain CFT073 / ATCC 700928 / UPEC).